The sequence spans 833 residues: Leucine--tRNA ligase (833 aa).

The 'HIGH' region signature appears at 41–52 (PYPSGAGLHVGH). Positions 610 to 614 (KMSKS) match the 'KMSKS' region motif. An ATP-binding site is contributed by Lys613.

Belongs to the class-I aminoacyl-tRNA synthetase family.

The protein localises to the cytoplasm. It carries out the reaction tRNA(Leu) + L-leucine + ATP = L-leucyl-tRNA(Leu) + AMP + diphosphate. In Streptococcus thermophilus (strain CNRZ 1066), this protein is Leucine--tRNA ligase.